Here is a 123-residue protein sequence, read N- to C-terminus: Cytochrome c-555 (123 aa).

The signal sequence occupies residues 1-27 (MDHKKTSIRTTALAALVLGAVAAPAFS). Cys46, Cys49, His50, and Met86 together coordinate heme c.

Binds 1 heme c group covalently per subunit.

In Methylococcus capsulatus (strain ATCC 33009 / NCIMB 11132 / Bath), this protein is Cytochrome c-555.